Reading from the N-terminus, the 471-residue chain is Monocarboxylate transporter 4 (471 aa).

Topologically, residues 1 to 17 (MGGAVVDEGPTGIKAPD) are cytoplasmic. Residues 18–38 (GGWGWAVLFGCFIITGFSYAF) traverse the membrane as a helical segment. Over 39–61 (PKAVSVFFKELMHEFGIGYSDTA) the chain is Extracellular. Residues 62–82 (WISSILLAMLYGTGPLCSMCV) traverse the membrane as a helical segment. Over 83–84 (NR) the chain is Cytoplasmic. Residues 85–105 (FGCRPVMLVGGLFASLGMVAA) traverse the membrane as a helical segment. Residues 106–109 (SFCR) lie on the Extracellular side of the membrane. A helical membrane pass occupies residues 110–130 (SIIQIYLTTGVITGLGLALNF). Over 131 to 149 (QPSLIMLNRYFNKRRPMAN) the chain is Cytoplasmic. Residues 150–170 (GLAAAGSPVFLCALSPLGQLL) form a helical membrane-spanning segment. Residues 171–179 (QDHYGWRGG) lie on the Extracellular side of the membrane. Residues 180-200 (FLILGGLLLNCCVCAALMRPL) traverse the membrane as a helical segment. The Cytoplasmic portion of the chain corresponds to 201–231 (VAPQASGGAEPHGPQRPSPRLLDLSVFRDRG). Residues 232–252 (FLIYAVAASIMVLGLFVPPVF) traverse the membrane as a helical segment. The Extracellular segment spans residues 253–267 (VVSYAKDMGVPDTKA). Residues 268–288 (AFLLTILGFIDIFARPTAGFI) form a helical membrane-spanning segment. The Cytoplasmic portion of the chain corresponds to 289 to 298 (TGLKKVRPYS). Residues 299–319 (VYLFSFAMFFNGFTDLTGSTA) form a helical membrane-spanning segment. Residues 320-321 (SD) lie on the Extracellular side of the membrane. The helical transmembrane segment at 322–342 (YGGLVVFCIFFGISYGMVGAL) threads the bilayer. Residues 343 to 355 (QFEVLMAIVGTQK) lie on the Cytoplasmic side of the membrane. Residues 356 to 376 (FSSAIGLVLLLEAVAVLIGPP) form a helical membrane-spanning segment. Residues 377-391 (SGGKLLDATKVYKYV) are Extracellular-facing. Residues 392–412 (FILAGAEVLTSSLVLLLGNFF) traverse the membrane as a helical segment. The Cytoplasmic portion of the chain corresponds to 413–471 (CIGKRKRPEVTKPEEVASEEEKLHKPPVDVRVDSREVEHFLKAEPEKNGEVVHTPETSV). Basolateral sorting signal regions lie at residues 429-447 (ASEE…VDSR) and 447-471 (REVE…ETSV). Phosphoserine is present on Ser-430. Thr-466 is subject to Phosphothreonine. Position 470 is a phosphoserine (Ser-470).

This sequence belongs to the major facilitator superfamily. Monocarboxylate porter (TC 2.A.1.13) family. In terms of assembly, interacts with BSG; interaction mediates SLC16A3 targeting to the plasma membrane. In terms of tissue distribution, detected in testis, small intestine, parotid gland, lung and brain. Small amounts are detected in heart, kidney and spleen. Expressed in skeletal muscle.

It localises to the cell membrane. Its subcellular location is the basolateral cell membrane. The enzyme catalyses (S)-lactate(in) + H(+)(in) = (S)-lactate(out) + H(+)(out). It catalyses the reaction pyruvate(out) + H(+)(out) = pyruvate(in) + H(+)(in). Functionally, proton-dependent transporter of monocarboxylates such as L-lactate and pyruvate. Plays a predominant role in the L-lactate efflux from highly glycolytic cells. The sequence is that of Monocarboxylate transporter 4 (Slc16a3) from Rattus norvegicus (Rat).